The chain runs to 149 residues: Transcription antitermination protein NusB (149 aa).

Belongs to the NusB family.

Its function is as follows. Involved in transcription antitermination. Required for transcription of ribosomal RNA (rRNA) genes. Binds specifically to the boxA antiterminator sequence of the ribosomal RNA (rrn) operons. This chain is Transcription antitermination protein NusB, found in Acinetobacter baumannii (strain SDF).